Here is a 542-residue protein sequence, read N- to C-terminus: Plasminogen-binding protein PgbB (542 aa).

Residues 399–542 are disordered; sequence KSASKKSQKG…RRKALEMNKK (144 aa). Basic and acidic residues-rich tracts occupy residues 418–435 and 447–456; these read QERH…ENKV and VKTRRPEPIR. Polar residues predominate over residues 457 to 467; the sequence is DQNNATQQGET. The span at 481-542 shows a compositional bias: basic and acidic residues; sequence NAAKKEVPKP…RRKALEMNKK (62 aa).

The protein resides in the cell surface. In terms of biological role, binds plasminogen, specifically, and in a concentration and lysine-dependent manner. Plasminogen is the precursor of plasmin, a serine protease that cleaves fibrin, fibronectin, laminin and vitronectin. Acquisition of plasminogen/plasmin could enable H.pylori to degrade host components. The polypeptide is Plasminogen-binding protein PgbB (pgbB) (Helicobacter pylori (strain ATCC 700392 / 26695) (Campylobacter pylori)).